The following is a 151-amino-acid chain: MKYQQLENLECGWKWTYLMKKHQEGELITKYIENSAAHAAVDKLIELESEPVRVLKWIEQHMNPDLSNRMKQTIRARRKRHFNAEHQHTRKKSIDLDFPVWHRLSALSQRRGNTLSETIIQLIEDAERKEKYANQMSSLKHDLEAILGKKE.

It belongs to the MatP family. Homodimer.

It is found in the cytoplasm. Functionally, required for spatial organization of the terminus region of the chromosome (Ter macrodomain) during the cell cycle. Prevents early segregation of duplicated Ter macrodomains during cell division. Binds specifically to matS, which is a 13 bp signature motif repeated within the Ter macrodomain. The sequence is that of Macrodomain Ter protein from Photorhabdus laumondii subsp. laumondii (strain DSM 15139 / CIP 105565 / TT01) (Photorhabdus luminescens subsp. laumondii).